We begin with the raw amino-acid sequence, 371 residues long: tRNA (guanine(26)-N(2))-dimethyltransferase (371 aa).

The region spanning 1–370 is the Trm1 methyltransferase domain; the sequence is MDVSEGGVTV…GGLAEVEAAV (370 aa). S-adenosyl-L-methionine is bound by residues Arg-36, Arg-66, Asp-81, Asp-107, and Ala-108. Positions 238, 241, 258, and 261 each coordinate Zn(2+).

It belongs to the class I-like SAM-binding methyltransferase superfamily. Trm1 family.

The enzyme catalyses guanosine(26) in tRNA + 2 S-adenosyl-L-methionine = N(2)-dimethylguanosine(26) in tRNA + 2 S-adenosyl-L-homocysteine + 2 H(+). Dimethylates a single guanine residue at position 26 of a number of tRNAs using S-adenosyl-L-methionine as donor of the methyl groups. The protein is tRNA (guanine(26)-N(2))-dimethyltransferase of Halobacterium salinarum (strain ATCC 700922 / JCM 11081 / NRC-1) (Halobacterium halobium).